The primary structure comprises 1187 residues: Myelin transcription factor 1-like protein (1187 aa).

The tract at residues M1–P20 is disordered. A CCHHC-type 1 zinc finger spans residues E22 to D65. C31, C36, H49, and C55 together coordinate Zn(2+). Disordered regions lie at residues P56–C178 and R221–S248. Acidic residues predominate over residues E89 to E172. The residue at position 251 (S251) is a Phosphoserine. 2 disordered regions span residues S343–E422 and R450–G509. Residues E344–V358 are compositionally biased toward polar residues. Basic and acidic residues-rich tracts occupy residues V362 to Y377, A401 to D412, and R450 to K504. 2 CCHHC-type zinc fingers span residues S496–I539 and L540–K583. Zn(2+) contacts are provided by C505, C510, H523, C529, C549, C554, H567, and C573. The tract at residues A684–S708 is disordered. 3 consecutive CCHHC-type zinc fingers follow at residues L895–I938, D944–G987, and K997–A1040. Residues C904, C909, H922, C928, C953, C958, H971, C977, C1006, C1011, H1024, and C1030 each contribute to the Zn(2+) site. The stretch at S1055–H1131 forms a coiled coil.

It belongs to the MYT1 family. Interacts with SIN3B. As to expression, brain, testis and pituitary gland. Expression is higher in the brain than in the testis and pituitary gland. Highest level expression seen in the developing CNS.

The protein localises to the nucleus. The protein resides in the chromosome. Functionally, transcription factor that plays a key role in neuronal differentiation. Acts by specifically repressing expression of non-neuronal genes during neuron differentiation. In contrast to other transcription repressors that inhibit specific lineages, mediates repression of multiple differentiation programs. Also represses expression of negative regulators of neurogenesis, such as members of the Notch signaling pathway, including HES1. The combination of three transcription factors, ASCL1, POU3F2/BRN2 and MYT1L, is sufficient to reprogram fibroblasts and other somatic cells into induced neuronal (iN) cells in vitro. Directly binds the 5'-AAGTT-3' core motif present on the promoter of target genes and represses transcription by recruiting a multiprotein complex containing SIN3B. The 5'-AAGTT-3' core motif is absent from the promoter of neural genes. This Rattus norvegicus (Rat) protein is Myelin transcription factor 1-like protein (Myt1l).